Here is a 129-residue protein sequence, read N- to C-terminus: M-zodatoxin-Lt8c (129 aa).

The signal sequence occupies residues 1–20; the sequence is MKYFVVALALVAAFACIAES. The propeptide occupies 21–60; sequence KPAESEHELAEVEEENELADLEDAVWLEHLADLSDLEEAR. The Processing quadruplet motif signature appears at 57–60; the sequence is EEAR.

Cleavage of the propeptide depends on the processing quadruplet motif (XXXR, with at least one of X being E). Expressed by the venom gland.

The protein resides in the secreted. Functionally, insecticidal, cytolytic and antimicrobial peptide. Forms voltage-dependent, ion-permeable channels in membranes. At high concentration causes cell membrane lysis. The sequence is that of M-zodatoxin-Lt8c (cit 1-3) from Lachesana tarabaevi (Spider).